Here is a 485-residue protein sequence, read N- to C-terminus: GlcNAc-binding protein A (485 aa).

An N-terminal signal peptide occupies residues 1-29 (MKKQPQKTLLAIALSVVSGTAMSHGYVSA). A Chitin-binding type-4 domain is found at 30–200 (VENGVAEARV…SFYNVIDVKF (171 aa)). Residues 437–478 (AGTKVLASDGAIYQCKPFPYSGYCVQWTPTATQYQPGTGSHW) form the Chitin-binding type-3 domain.

This sequence belongs to the GbpA family.

Its subcellular location is the secreted. Functionally, probably interacts with GlcNAc residues. May promote attachment to both epithelial cell surfaces and chitin. The sequence is that of GlcNAc-binding protein A from Vibrio vulnificus (strain YJ016).